The chain runs to 415 residues: Putative glutamate--cysteine ligase 2 (415 aa).

Belongs to the glutamate--cysteine ligase type 2 family. YbdK subfamily.

The catalysed reaction is L-cysteine + L-glutamate + ATP = gamma-L-glutamyl-L-cysteine + ADP + phosphate + H(+). ATP-dependent carboxylate-amine ligase which exhibits weak glutamate--cysteine ligase activity. This chain is Putative glutamate--cysteine ligase 2, found in Bordetella petrii (strain ATCC BAA-461 / DSM 12804 / CCUG 43448).